A 229-amino-acid chain; its full sequence is Putative ankyrin repeat protein L148 (229 aa).

ANK repeat units lie at residues 70–95 (ILDYALYFSCGIGNVRIIKEMIPDNY), 96–126 (IGTEKLIFAAIQNDQDSVIDFFASRGFDLRI), 127–156 (NNDYLLRLAAEMNSLKTAKYLVSKGANCQA), and 157–186 (YNNAPLQKASINGHFEMVKFLVENGASVAA).

The protein is Putative ankyrin repeat protein L148 of Acanthamoeba polyphaga (Amoeba).